The following is a 375-amino-acid chain: 2-heptyl-3-hydroxy-4(1H)-quinolone synthase (375 aa).

The protein belongs to the 3-hydroxybenzoate 6-hydroxylase family.

The catalysed reaction is 2-heptyl-4(1H)-quinolone + NADH + O2 + H(+) = 2-heptyl-3-hydroxy-4(1H)-quinolone + NAD(+) + H2O. Functionally, involved in the degradation pathway of the Pseudomonas aeruginosa quorum sensing signal molecule HHQ (2-heptyl-4(1H)-quinolone) to anthranilate. Catalyzes the hydroxylation of HHQ to PQS (2-heptyl-3-hydroxy-4(1H)-quinolone). In Mycobacteroides abscessus (strain ATCC 19977 / DSM 44196 / CCUG 20993 / CIP 104536 / JCM 13569 / NCTC 13031 / TMC 1543 / L948) (Mycobacterium abscessus), this protein is 2-heptyl-3-hydroxy-4(1H)-quinolone synthase.